A 398-amino-acid polypeptide reads, in one-letter code: Phosphoglycerate kinase (398 aa).

Residues 23–25, Arg38, 61–64, Arg122, and Arg155 contribute to the substrate site; these read DFN and HMGK. ATP-binding positions include Lys206, Gly297, Glu328, and 354 to 357; that span reads GGDS.

It belongs to the phosphoglycerate kinase family. Monomer.

It is found in the cytoplasm. The catalysed reaction is (2R)-3-phosphoglycerate + ATP = (2R)-3-phospho-glyceroyl phosphate + ADP. The protein operates within carbohydrate degradation; glycolysis; pyruvate from D-glyceraldehyde 3-phosphate: step 2/5. The polypeptide is Phosphoglycerate kinase (Clostridium botulinum (strain Langeland / NCTC 10281 / Type F)).